We begin with the raw amino-acid sequence, 295 residues long: Ribosomal protein L11 methyltransferase (295 aa).

S-adenosyl-L-methionine contacts are provided by threonine 145, glycine 166, aspartate 188, and asparagine 230.

Belongs to the methyltransferase superfamily. PrmA family.

It is found in the cytoplasm. It carries out the reaction L-lysyl-[protein] + 3 S-adenosyl-L-methionine = N(6),N(6),N(6)-trimethyl-L-lysyl-[protein] + 3 S-adenosyl-L-homocysteine + 3 H(+). Its function is as follows. Methylates ribosomal protein L11. In Pectobacterium atrosepticum (strain SCRI 1043 / ATCC BAA-672) (Erwinia carotovora subsp. atroseptica), this protein is Ribosomal protein L11 methyltransferase.